The following is an 806-amino-acid chain: WEB family protein At3g02930, chloroplastic (806 aa).

The N-terminal 78 residues, 1–78, are a transit peptide targeting the chloroplast; sequence MASKIKNGLS…PTPPEKTQIR (78 aa). Disordered regions lie at residues 1 to 94 and 380 to 403; these read MASK…QIKE and KSEQ…EKLK. Residues 9–22 show a composition bias toward low complexity; the sequence is LSDTTLRKSSSTSL. Positions 34 to 59 are enriched in polar residues; sequence PDSNSPSPTQQQSRLSFERPSSNSKP. Coiled coils occupy residues 88–530, 585–662, and 698–757; these read QSVQ…FESA, DCLK…IEEN, and ETLD…EDLN. Over residues 391–403 the composition is skewed to basic and acidic residues; it reads ESSKSEKEAEKLK. Disordered stretches follow at residues 684 to 725 and 746 to 777; these read ENGY…EDET and KESA…EDEL. Basic and acidic residues-rich tracts occupy residues 685 to 699 and 706 to 725; these read NGYR…KVET and KLEE…EDET. Polar residues predominate over residues 759–769; sequence VDQSQKTSPVN.

The protein belongs to the WEB family.

The protein localises to the plastid. It is found in the chloroplast. The polypeptide is WEB family protein At3g02930, chloroplastic (Arabidopsis thaliana (Mouse-ear cress)).